The chain runs to 750 residues: Photosystem I P700 chlorophyll a apoprotein A1 (750 aa).

Transmembrane regions (helical) follow at residues 70–93 (VFSA…FHGA), 156–179 (LYCT…FHYH), 195–219 (LNHH…HVSL), 291–309 (IAHH…GHMY), 346–369 (WHAQ…HHMY), 385–411 (LSLF…IFMV), 433–455 (AIIS…LYIH), and 531–549 (FLVH…LILL). Residues C573 and C582 each contribute to the [4Fe-4S] cluster site. Transmembrane regions (helical) follow at residues 589-610 (HVFL…HFSW) and 664-686 (LSAY…MFLF). Residue H675 coordinates chlorophyll a'. M683 and Y691 together coordinate chlorophyll a. W692 lines the phylloquinone pocket. Residues 724 to 744 (AVGVTHYLLGGIATTWAFFLA) form a helical membrane-spanning segment.

Belongs to the PsaA/PsaB family. As to quaternary structure, the PsaA/B heterodimer binds the P700 chlorophyll special pair and subsequent electron acceptors. PSI consists of a core antenna complex that captures photons, and an electron transfer chain that converts photonic excitation into a charge separation. The eukaryotic PSI reaction center is composed of at least 11 subunits. P700 is a chlorophyll a/chlorophyll a' dimer, A0 is one or more chlorophyll a, A1 is one or both phylloquinones and FX is a shared 4Fe-4S iron-sulfur center. serves as cofactor.

The protein localises to the plastid. It localises to the chloroplast thylakoid membrane. The catalysed reaction is reduced [plastocyanin] + hnu + oxidized [2Fe-2S]-[ferredoxin] = oxidized [plastocyanin] + reduced [2Fe-2S]-[ferredoxin]. In terms of biological role, psaA and PsaB bind P700, the primary electron donor of photosystem I (PSI), as well as the electron acceptors A0, A1 and FX. PSI is a plastocyanin-ferredoxin oxidoreductase, converting photonic excitation into a charge separation, which transfers an electron from the donor P700 chlorophyll pair to the spectroscopically characterized acceptors A0, A1, FX, FA and FB in turn. Oxidized P700 is reduced on the lumenal side of the thylakoid membrane by plastocyanin. In Drimys granadensis, this protein is Photosystem I P700 chlorophyll a apoprotein A1.